A 450-amino-acid polypeptide reads, in one-letter code: 3-phosphoshikimate 1-carboxyvinyltransferase (450 aa).

K23, S24, and R28 together coordinate 3-phosphoshikimate. Residue K23 participates in phosphoenolpyruvate binding. G96 and R124 together coordinate phosphoenolpyruvate. Residues S167, S168, Q169, S196, E311, and H340 each contribute to the 3-phosphoshikimate site. Q169 serves as a coordination point for phosphoenolpyruvate. E311 serves as the catalytic Proton acceptor. Phosphoenolpyruvate is bound by residues R344, R385, and K410. A disordered region spans residues 426 to 450; the sequence is GQGWGYPQPRSGQRARRATGQGSGG.

The protein belongs to the EPSP synthase family. In terms of assembly, monomer.

Its subcellular location is the cytoplasm. The catalysed reaction is 3-phosphoshikimate + phosphoenolpyruvate = 5-O-(1-carboxyvinyl)-3-phosphoshikimate + phosphate. The protein operates within metabolic intermediate biosynthesis; chorismate biosynthesis; chorismate from D-erythrose 4-phosphate and phosphoenolpyruvate: step 6/7. Its function is as follows. Catalyzes the transfer of the enolpyruvyl moiety of phosphoenolpyruvate (PEP) to the 5-hydroxyl of shikimate-3-phosphate (S3P) to produce enolpyruvyl shikimate-3-phosphate and inorganic phosphate. The protein is 3-phosphoshikimate 1-carboxyvinyltransferase of Mycobacterium bovis (strain ATCC BAA-935 / AF2122/97).